Reading from the N-terminus, the 347-residue chain is Transcription factor EC (347 aa).

Residues 1 to 119 form a necessary for transcriptional transactivation region; that stretch reads MTLDHQIINP…GLTSASCPSS (119 aa). The region spanning 139–192 is the bHLH domain; sequence QKKDNHNLIERRRRYNINYRIKELGTLIPKSNDPDMRWNKGTILKASVEYIKWL. The interval 271–347 is necessary for transcriptional transactivation; the sequence is PSPEFCDQAI…SFSSDDGDEL (77 aa). Residues 319-347 are disordered; that stretch reads DPLLSATSPAVSKESSRRSSFSSDDGDEL. Positions 326–341 are enriched in low complexity; it reads SPAVSKESSRRSSFSS.

The protein belongs to the MiT/TFE family. Homodimer. Forms heterodimers with MITF and TFE3. Interacts with MITF.

The protein resides in the nucleus. Transcriptional regulator that acts as a repressor or an activator. Acts as a transcriptional repressor on minimal promoter containing element F (that includes an E-box sequence). Binds to element F in an E-box sequence-specific manner. Acts as a transcriptional transactivator on the proximal promoter region of the tartrate-resistant acid phosphatase (TRAP) E-box containing promoter. Collaborates with MITF in target gene activation. Acts as a transcriptional repressor on minimal promoter containing mu E3 enhancer sequence. Binds to mu E3 DNA sequence of the immunoglobulin heavy-chain gene enhancer. Binds DNA in a homo- or heterodimeric form. This Pan troglodytes (Chimpanzee) protein is Transcription factor EC (TFEC).